Reading from the N-terminus, the 62-residue chain is Prokaryotic ubiquitin-like protein Pup (62 aa).

The tract at residues 1–36 is disordered; sequence MEKSSQIHGSKPGDDNADEPENAAGQSQIRKQGADD. The ARC ATPase binding stretch occupies residues 18 to 56; sequence DEPENAAGQSQIRKQGADDLLDEIDGLLESNAEEFVRSY. Glutamine 62 carries the post-translational modification Deamidated glutamine. Residue glutamine 62 forms an Isoglutamyl lysine isopeptide (Gln-Lys) (interchain with K-? in acceptor proteins) linkage.

This sequence belongs to the prokaryotic ubiquitin-like protein family. Strongly interacts with the proteasome-associated ATPase ARC through a hydrophobic interface; the interacting region of Pup lies in its C-terminal half. There is one Pup binding site per ARC hexamer ring. In terms of processing, is modified by deamidation of its C-terminal glutamine to glutamate by the deamidase Dop, a prerequisite to the subsequent pupylation process.

It functions in the pathway protein degradation; proteasomal Pup-dependent pathway. Protein modifier that is covalently attached to lysine residues of substrate proteins, thereby targeting them for proteasomal degradation. The tagging system is termed pupylation. The chain is Prokaryotic ubiquitin-like protein Pup from Corynebacterium kroppenstedtii (strain DSM 44385 / JCM 11950 / CIP 105744 / CCUG 35717).